Reading from the N-terminus, the 91-residue chain is Large ribosomal subunit protein uL22 (91 aa).

Belongs to the universal ribosomal protein uL22 family. Part of the 50S ribosomal subunit.

Functionally, this protein binds specifically to 23S rRNA; its binding is stimulated by other ribosomal proteins, e.g. L4, L17, and L20. It is important during the early stages of 50S assembly. It makes multiple contacts with different domains of the 23S rRNA in the assembled 50S subunit and ribosome. The globular domain of the protein is located near the polypeptide exit tunnel on the outside of the subunit, while an extended beta-hairpin is found that lines the wall of the exit tunnel in the center of the 70S ribosome. In Clover yellow edge phytoplasma, this protein is Large ribosomal subunit protein uL22 (rplV).